The following is a 206-amino-acid chain: Ras-related protein Rab7 (206 aa).

GTP-binding positions include 15 to 22 (GDTGVGKT), 63 to 67 (DTAGQ), and 125 to 128 (NKID). Residues Cys-204 and Cys-206 are each lipidated (S-geranylgeranyl cysteine). Cysteine methyl ester is present on Cys-206.

It belongs to the small GTPase superfamily. Rab family.

It is found in the cell membrane. Protein transport. Probably involved in vesicular traffic. The chain is Ras-related protein Rab7 from Vigna aconitifolia (Moth bean).